Here is a 348-residue protein sequence, read N- to C-terminus: NADH-ubiquinone oxidoreductase chain 2 (348 aa).

The next 9 membrane-spanning stretches (helical) occupy residues 13 to 33 (VGLG…WMGL), 60 to 80 (FLTQ…NAWM), 93 to 113 (IAST…PMHF), 149 to 169 (IDPL…GWGG), 178 to 197 (ILAY…IQYA), 202 to 219 (LIAL…FLTL), 246 to 266 (LVLL…KWLI), 274 to 294 (DLPI…YFYL), and 326 to 346 (LALF…ILML).

This sequence belongs to the complex I subunit 2 family.

It is found in the mitochondrion inner membrane. It catalyses the reaction a ubiquinone + NADH + 5 H(+)(in) = a ubiquinol + NAD(+) + 4 H(+)(out). Core subunit of the mitochondrial membrane respiratory chain NADH dehydrogenase (Complex I) that is believed to belong to the minimal assembly required for catalysis. Complex I functions in the transfer of electrons from NADH to the respiratory chain. The immediate electron acceptor for the enzyme is believed to be ubiquinone. The protein is NADH-ubiquinone oxidoreductase chain 2 (MT-ND2) of Cyprinus carpio (Common carp).